The following is a 703-amino-acid chain: MAALAAGVSKQRAVAEGLGSNQNAVKYLGQDFETLRKQCLNSGVLFKDPEFPACPSALGYKDLGPGSPDTQGIVWKRPTELCPNPQFIVGGATRTDIRQGGLGDCWLLAAIASLTLNEKLLYRVLPRDQSFQKDYAGIFHFQFWQYGEWVEVVIDDRLPTKNGQLLFLHSEEGNEFWSALLEKAYAKLNGSYEALVGGSTIEGFEDFTGGISEFYDLKKPPENLYYIIQKALRKGSLLGCSIDVSTAAEAEATTRQKLVKGHAYSVTGVEEVNFHGRPEKLIRLRNPWGEVEWSGAWSDNAPEWNYIDPRRKEELDKKAEDGEFWMSFSDFLKQYSRLEICNLSPDSLSSEEIHKWNLVLFNGRWTRGSTAGGCLNYPGTYWTNPQFKIHLDEVDEDQEEGTSEPCCTVLLGLMQKNRRRQKRIGQGMLSIGYAVYQIPKELESHTDAHLGRDFFLGRQPSTCSSTYMNLREVSSRVRLPPGQYLVVPSTFEPFKDGDFCLRVFSEKKAKALEIGDTVSGHPHEPHPRDMDEEDEHVRSLFEEFVGKDSEISANQLKRVLNEVLSKRTDMKFDGFNINTCREMISLLDSDGTGSLGPMEFKTLWLKIRTYLEIFQEMDHNHVGTIEAHEMRTALKKAGFTLNNQVQQTIAMRYACSKLGVDFNGFVACMIRLETLFKLFRLLDKDQNGIVQLSLAEWLCCVLV.

The 300-residue stretch at 45-344 folds into the Calpain catalytic domain; the sequence is LFKDPEFPAC…YSRLEICNLS (300 aa). Active-site residues include C105, H262, and N286. The domain III stretch occupies residues 355–512; the sequence is KWNLVLFNGR…VFSEKKAKAL (158 aa). Residues 513–531 form a linker region; it reads EIGDTVSGHPHEPHPRDMD. 4 EF-hand domains span residues 532-566, 575-608, 605-640, and 670-703; these read EEDEHVRSLFEEFVGKDSEISANQLKRVLNEVLSK, FNINTCREMISLLDSDGTGSLGPMEFKTLWLKIR, LKIRTYLEIFQEMDHNHVGTIEAHEMRTALKKAGFT, and IRLETLFKLFRLLDKDQNGIVQLSLAEWLCCVLV. Residues 532–703 are domain IV; the sequence is EEDEHVRSLF…LAEWLCCVLV (172 aa). The Ca(2+) site is built by D588, D590, T592, S594, E599, D618, N620, T624, and E629.

It belongs to the peptidase C2 family. As to quaternary structure, monomer and homooligomer. Interacts with COPS1/GPS1, COPB1, EYA2, NME2, NME4 and TOMM70. Ca(2+) is required as a cofactor. In terms of processing, undergoes autolytic cleavage between Ala-5 and Ala-6 which gives rise to fragments extending from Ala-6 to the C-terminus, Ala-6 to the EF-hand 2 domain and from Ala-6 to the beginning of domain III. In terms of tissue distribution, predominantly expressed in the stomach. Localizes strictly to the surface mucus cells in the gastric epithelium and the mucus-secreting goblet cells in the duodenum. Detected in the pituitary after estrogen stimulation.

The protein resides in the cytoplasm. It localises to the golgi apparatus. The catalysed reaction is Broad endopeptidase specificity.. Calcium-regulated non-lysosomal thiol-protease. Involved in membrane trafficking in the gastric surface mucus cells (pit cells) and may involve the membrane trafficking of mucus cells via interactions with coat protein. Proteolytically cleaves the beta-subunit of coatomer complex. The sequence is that of Calpain-8 (Capn8) from Rattus norvegicus (Rat).